Reading from the N-terminus, the 270-residue chain is Phosphatidylglycerol--prolipoprotein diacylglyceryl transferase (270 aa).

7 consecutive transmembrane segments (helical) span residues 10 to 30, 56 to 76, 92 to 112, 120 to 140, 175 to 195, 202 to 222, and 237 to 257; these read VAVAIGPLQIHWYGLMYLVGI, LIFWLAMGVIVGGRLGYVLFY, WKGGMAFHGGFVGVMIAAWWF, FFQLMDFVAPLVPIGLGAGRI, SQLYQFALEGVALFIILNLYA, MAVSGMFALFYGIFRFVVEFV, and VTMGQILSLPMIIAGLLLIWL. A 1,2-diacyl-sn-glycero-3-phospho-(1'-sn-glycerol) is bound at residue arginine 139.

The protein belongs to the Lgt family.

It localises to the cell inner membrane. The enzyme catalyses L-cysteinyl-[prolipoprotein] + a 1,2-diacyl-sn-glycero-3-phospho-(1'-sn-glycerol) = an S-1,2-diacyl-sn-glyceryl-L-cysteinyl-[prolipoprotein] + sn-glycerol 1-phosphate + H(+). It participates in protein modification; lipoprotein biosynthesis (diacylglyceryl transfer). In terms of biological role, catalyzes the transfer of the diacylglyceryl group from phosphatidylglycerol to the sulfhydryl group of the N-terminal cysteine of a prolipoprotein, the first step in the formation of mature lipoproteins. The chain is Phosphatidylglycerol--prolipoprotein diacylglyceryl transferase from Pseudomonas syringae pv. syringae (strain B728a).